A 433-amino-acid polypeptide reads, in one-letter code: GTPase Obg (433 aa).

In terms of domain architecture, Obg spans 1-159; that stretch reads MAITDYCECR…LNVSLEVKYL (159 aa). Residues 160 to 329 form the OBG-type G domain; sequence ANVGIVGFPN…LLDRVFELYN (170 aa). Residues 166–173, 191–195, 212–215, 282–285, and 310–312 each bind GTP; these read GFPNSGKS, FTTLI, DIPG, NKID, and ISA. 2 residues coordinate Mg(2+): serine 173 and threonine 193. Positions 355 to 433 constitute an OCT domain; the sequence is TNENNNDPLN…FDGCEFVIND (79 aa).

It belongs to the TRAFAC class OBG-HflX-like GTPase superfamily. OBG GTPase family. In terms of assembly, monomer. Mg(2+) serves as cofactor.

It localises to the cytoplasm. Its function is as follows. An essential GTPase which binds GTP, GDP and possibly (p)ppGpp with moderate affinity, with high nucleotide exchange rates and a fairly low GTP hydrolysis rate. Plays a role in control of the cell cycle, stress response, ribosome biogenesis and in those bacteria that undergo differentiation, in morphogenesis control. This Mycoplasma genitalium (strain ATCC 33530 / DSM 19775 / NCTC 10195 / G37) (Mycoplasmoides genitalium) protein is GTPase Obg.